A 452-amino-acid polypeptide reads, in one-letter code: Probable E3 ubiquitin-protein ligase ARI15 (452 aa).

The segment at 22–256 (SRVYCGICSN…GTSGSCLAPA (235 aa)) is TRIAD supradomain. Residues Cys-26, Cys-29, Cys-54, His-56, Cys-59, Cys-62, Cys-83, Cys-88, Cys-128, Cys-133, Cys-154, Cys-156, Cys-161, Cys-164, His-169, Cys-174, Cys-208, Cys-211, Cys-229, Cys-231, Cys-236, Cys-239, His-246, and Cys-252 each contribute to the Zn(2+) site. Residues 26 to 88 (CGICSNIGDD…TAISCPDRDC (63 aa)) form an RING-type 1 zinc finger. The segment at 106–174 (AMYELYILKS…MLESHRPVTC (69 aa)) adopts an IBR-type zinc-finger fold. The RING-type 2; atypical zinc-finger motif lies at 208-239 (CPHCFIPVEIDGERPWAQFLTCVCSGRFCWKC). The RanBP2-type zinc finger occupies 414–445 (NYGGPYWLCDRCTYGNSWFQRACKMCCDPTAS).

The protein belongs to the RBR family. Ariadne subfamily. It depends on Zn(2+) as a cofactor. In terms of tissue distribution, ubiquitous.

It catalyses the reaction [E2 ubiquitin-conjugating enzyme]-S-ubiquitinyl-L-cysteine + [acceptor protein]-L-lysine = [E2 ubiquitin-conjugating enzyme]-L-cysteine + [acceptor protein]-N(6)-ubiquitinyl-L-lysine.. It participates in protein modification; protein ubiquitination. Functionally, might act as an E3 ubiquitin-protein ligase, or as part of E3 complex, which accepts ubiquitin from specific E2 ubiquitin-conjugating enzymes and then transfers it to substrates. This is Probable E3 ubiquitin-protein ligase ARI15 (ARI15) from Arabidopsis thaliana (Mouse-ear cress).